The primary structure comprises 285 residues: Small ribosomal subunit protein uS5x (285 aa).

Basic and acidic residues predominate over residues 1-19; sequence MAERGGERGVERGGERGDF. The interval 1–51 is disordered; the sequence is MAERGGERGVERGGERGDFGRGFGGRGGRGDRGGRGRGGRGGRRGGRASEE. A compositionally biased stretch (basic residues) spans 35–46; that stretch reads RGRGGRGGRRGG. The region spanning 96–159 is the S5 DRBM domain; that stretch reads LKDEVMKIMP…ILAKLSVVPV (64 aa).

Belongs to the universal ribosomal protein uS5 family. In terms of assembly, interacts with MBD6.

Component of the ribosome, a large ribonucleoprotein complex responsible for the synthesis of proteins in the cell. The small ribosomal subunit (SSU) binds messenger RNAs (mRNAs) and translates the encoded message by selecting cognate aminoacyl-transfer RNA (tRNA) molecules. The large subunit (LSU) contains the ribosomal catalytic site termed the peptidyl transferase center (PTC), which catalyzes the formation of peptide bonds, thereby polymerizing the amino acids delivered by tRNAs into a polypeptide chain. The nascent polypeptides leave the ribosome through a tunnel in the LSU and interact with protein factors that function in enzymatic processing, targeting, and the membrane insertion of nascent chains at the exit of the ribosomal tunnel. Plays a role in the assembly and function of the 40S ribosomal subunit. Mutations in this protein affects the control of translational fidelity. Involved in nucleolar processing of pre-18S ribosomal RNA and ribosome assembly. Also involved in RNA-directed DNA methylation (RdDM). This chain is Small ribosomal subunit protein uS5x, found in Arabidopsis thaliana (Mouse-ear cress).